The primary structure comprises 333 residues: Na(+)/H(+) exchange regulatory cofactor NHE-RF1 (333 aa).

In terms of domain architecture, PDZ 1 spans 13–93 (LCCMEKGPDG…AVRLLVVQPQ (81 aa)). Disordered stretches follow at residues 90–164 (VQPQ…RAVD) and 232–333 (LAGP…FSNL). Residues 97-111 (QPPKTHSDPDGEAQR) show a composition bias toward basic and acidic residues. The span at 112-122 (EPPAAETPAAE) shows a compositional bias: low complexity. The span at 124–133 (SGPEERELRP) shows a compositional bias: basic and acidic residues. In terms of domain architecture, PDZ 2 spans 135–215 (LCRIKKGPNG…ETKLLVVGVL (81 aa)). 2 stretches are compositionally biased toward basic and acidic residues: residues 274–289 (SETHSEPDTQEGDKRS) and 323–333 (WSKKNELFSNL).

It localises to the endomembrane system. It is found in the cell projection. The protein resides in the filopodium. Its subcellular location is the ruffle. The protein localises to the microvillus. Functionally, scaffold protein that connects plasma membrane proteins with members of the ezrin/moesin/radixin family and thereby helps to link them to the actin cytoskeleton and to regulate their surface expression. Was first known to play a role in the regulation of the activity and subcellular location of SLC9A3. May enhance Wnt signaling. This is Na(+)/H(+) exchange regulatory cofactor NHE-RF1 (NHERF1) from Gallus gallus (Chicken).